Consider the following 244-residue polypeptide: ATP synthase subunit a (244 aa).

The next 7 helical transmembrane spans lie at 20–40 (FFDI…VIVI), 81–101 (GILF…LNVM), 113–133 (QLLV…IWGF), 140–160 (FLNI…LVFI), 176–196 (LFAN…AAIY), 202–222 (FIGI…LGIA), and 223–243 (FLQA…IINL).

Belongs to the ATPase A chain family. In terms of assembly, F-type ATPases have 2 components, CF(1) - the catalytic core - and CF(0) - the membrane proton channel. CF(1) has five subunits: alpha(3), beta(3), gamma(1), delta(1), epsilon(1). CF(0) has three main subunits: a, b and c.

It localises to the mitochondrion inner membrane. In terms of biological role, mitochondrial membrane ATP synthase (F(1)F(0) ATP synthase or Complex V) produces ATP from ADP in the presence of a proton gradient across the membrane which is generated by electron transport complexes of the respiratory chain. F-type ATPases consist of two structural domains, F(1) - containing the extramembraneous catalytic core and F(0) - containing the membrane proton channel, linked together by a central stalk and a peripheral stalk. During catalysis, ATP synthesis in the catalytic domain of F(1) is coupled via a rotary mechanism of the central stalk subunits to proton translocation. Key component of the proton channel; it may play a direct role in the translocation of protons across the membrane. This is ATP synthase subunit a (atp6) from Dictyostelium discoideum (Social amoeba).